The following is a 265-amino-acid chain: MIHDDDPNAPGAPHDDDATAAPASATRAAPAAGDDDDANPLHLRRIRSFVTRAGRVSTGQRRAIDELGPRFVIPYGSAQPDWDAIFGRRAPRVLEIGFGMGASTAEIAALRPGDDFIGVEVHEPGVGALLKLIGEQQLSNIRIIQHDAVEVLAQMIAPDSLDGVHIFFPDPWHKARHHKRRLIQPPFVAQLAAHLKPGAYLHCATDWQNYAEQMLEVLSADPSLENTAQDYAPRPGYRPVTKFERRGLRLGHGVWDLVFRKKHAG.

The tract at residues Met-1–Pro-40 is disordered. A compositionally biased stretch (low complexity) spans Thr-19 to Ala-32. Positions 95, 120, 147, and 170 each coordinate S-adenosyl-L-methionine. Asp-170 is a catalytic residue. Residues Lys-174, Asp-206, and Thr-241–Glu-244 contribute to the substrate site.

It belongs to the class I-like SAM-binding methyltransferase superfamily. TrmB family.

It catalyses the reaction guanosine(46) in tRNA + S-adenosyl-L-methionine = N(7)-methylguanosine(46) in tRNA + S-adenosyl-L-homocysteine. Its pathway is tRNA modification; N(7)-methylguanine-tRNA biosynthesis. Functionally, catalyzes the formation of N(7)-methylguanine at position 46 (m7G46) in tRNA. The polypeptide is tRNA (guanine-N(7)-)-methyltransferase (Burkholderia pseudomallei (strain 1710b)).